A 113-amino-acid polypeptide reads, in one-letter code: 14 kDa zinc-binding protein (113 aa).

Residues 3–113 (IFGKIISKEI…GGRQMNWPPG (111 aa)) form the HIT domain. The Histidine triad motif signature appears at 97–101 (HIHVH).

As to quaternary structure, homodimer.

In Brassica juncea (Indian mustard), this protein is 14 kDa zinc-binding protein.